The following is a 497-amino-acid chain: Aldehyde dehydrogenase (497 aa).

Residue 241–246 (GSTVVG) participates in NAD(+) binding. Glutamate 264 serves as the catalytic Proton acceptor. The active-site Nucleophile is the cysteine 298.

This sequence belongs to the aldehyde dehydrogenase family.

The protein resides in the cytoplasm. The enzyme catalyses an aldehyde + NAD(+) + H2O = a carboxylate + NADH + 2 H(+). The protein operates within alcohol metabolism; ethanol degradation; acetate from ethanol: step 2/2. The protein is Aldehyde dehydrogenase (ALTA10) of Alternaria alternata (Alternaria rot fungus).